Reading from the N-terminus, the 433-residue chain is Serine--tRNA ligase (433 aa).

235–237 serves as a coordination point for L-serine; sequence TSE. Residue 266-268 participates in ATP binding; that stretch reads RSE. Residue E289 coordinates L-serine. Residue 353-356 coordinates ATP; it reads EISS. S388 contacts L-serine.

The protein belongs to the class-II aminoacyl-tRNA synthetase family. Type-1 seryl-tRNA synthetase subfamily. In terms of assembly, homodimer. The tRNA molecule binds across the dimer.

The protein resides in the cytoplasm. The catalysed reaction is tRNA(Ser) + L-serine + ATP = L-seryl-tRNA(Ser) + AMP + diphosphate + H(+). It carries out the reaction tRNA(Sec) + L-serine + ATP = L-seryl-tRNA(Sec) + AMP + diphosphate + H(+). The protein operates within aminoacyl-tRNA biosynthesis; selenocysteinyl-tRNA(Sec) biosynthesis; L-seryl-tRNA(Sec) from L-serine and tRNA(Sec): step 1/1. Functionally, catalyzes the attachment of serine to tRNA(Ser). Is also able to aminoacylate tRNA(Sec) with serine, to form the misacylated tRNA L-seryl-tRNA(Sec), which will be further converted into selenocysteinyl-tRNA(Sec). This chain is Serine--tRNA ligase, found in Burkholderia thailandensis (strain ATCC 700388 / DSM 13276 / CCUG 48851 / CIP 106301 / E264).